The primary structure comprises 341 residues: Guanine nucleotide-binding protein subunit beta (341 aa).

WD repeat units lie at residues 54–93 (GHLA…KVHA), 96–135 (LRSS…GNVR), 142–180 (GHTG…QTTA), 183–222 (GHTG…CKQT), 225–264 (GHES…EIGM), 269–308 (NIIC…RAGV), and 311–341 (GHDN…RIWN).

The protein belongs to the WD repeat G protein beta family. In terms of assembly, g proteins are composed of 3 units, alpha, beta and gamma. The G protein beta1-gamma2 dimer interacts with calmodulin. In terms of tissue distribution, abundantly expressed in gills, gonad and mantle and at lower levels in digestion gland. Not detected in muscle.

It localises to the cytoplasm. Its function is as follows. Guanine nucleotide-binding proteins (G proteins) are involved as a modulator or transducer in various transmembrane signaling systems. The beta and gamma chains are required for the GTPase activity, for replacement of GDP by GTP, and for G protein-effector interaction. The polypeptide is Guanine nucleotide-binding protein subunit beta (Pinctada fucata (Akoya pearl oyster)).